The chain runs to 309 residues: Methionyl-tRNA formyltransferase (309 aa).

112-115 (SLLP) lines the (6S)-5,6,7,8-tetrahydrofolate pocket.

This sequence belongs to the Fmt family.

The enzyme catalyses L-methionyl-tRNA(fMet) + (6R)-10-formyltetrahydrofolate = N-formyl-L-methionyl-tRNA(fMet) + (6S)-5,6,7,8-tetrahydrofolate + H(+). Its function is as follows. Attaches a formyl group to the free amino group of methionyl-tRNA(fMet). The formyl group appears to play a dual role in the initiator identity of N-formylmethionyl-tRNA by promoting its recognition by IF2 and preventing the misappropriation of this tRNA by the elongation apparatus. In Bartonella quintana (strain Toulouse) (Rochalimaea quintana), this protein is Methionyl-tRNA formyltransferase.